We begin with the raw amino-acid sequence, 409 residues long: 1-deoxy-D-xylulose 5-phosphate reductoisomerase (409 aa).

Positions 10, 11, 12, 13, 36, 37, 38, and 126 each coordinate NADPH. Lys127 contacts 1-deoxy-D-xylulose 5-phosphate. Glu128 provides a ligand contact to NADPH. Asp152 serves as a coordination point for Mn(2+). 1-deoxy-D-xylulose 5-phosphate is bound by residues Ser153, Glu154, Ser190, and His213. Glu154 is a binding site for Mn(2+). Residue Gly219 coordinates NADPH. Positions 226, 231, 232, and 235 each coordinate 1-deoxy-D-xylulose 5-phosphate. Residue Glu235 coordinates Mn(2+).

This sequence belongs to the DXR family. Requires Mg(2+) as cofactor. It depends on Mn(2+) as a cofactor.

It catalyses the reaction 2-C-methyl-D-erythritol 4-phosphate + NADP(+) = 1-deoxy-D-xylulose 5-phosphate + NADPH + H(+). Its pathway is isoprenoid biosynthesis; isopentenyl diphosphate biosynthesis via DXP pathway; isopentenyl diphosphate from 1-deoxy-D-xylulose 5-phosphate: step 1/6. Catalyzes the NADPH-dependent rearrangement and reduction of 1-deoxy-D-xylulose-5-phosphate (DXP) to 2-C-methyl-D-erythritol 4-phosphate (MEP). The protein is 1-deoxy-D-xylulose 5-phosphate reductoisomerase of Prochlorococcus marinus (strain MIT 9515).